A 965-amino-acid polypeptide reads, in one-letter code: Glycine dehydrogenase (decarboxylating) 1 (965 aa).

Lys-713 carries the N6-(pyridoxal phosphate)lysine modification.

The protein belongs to the GcvP family. The glycine cleavage system is composed of four proteins: P, T, L and H. The cofactor is pyridoxal 5'-phosphate.

The enzyme catalyses N(6)-[(R)-lipoyl]-L-lysyl-[glycine-cleavage complex H protein] + glycine + H(+) = N(6)-[(R)-S(8)-aminomethyldihydrolipoyl]-L-lysyl-[glycine-cleavage complex H protein] + CO2. In terms of biological role, the glycine cleavage system catalyzes the degradation of glycine. The P protein binds the alpha-amino group of glycine through its pyridoxal phosphate cofactor; CO(2) is released and the remaining methylamine moiety is then transferred to the lipoamide cofactor of the H protein. The sequence is that of Glycine dehydrogenase (decarboxylating) 1 from Colwellia psychrerythraea (strain 34H / ATCC BAA-681) (Vibrio psychroerythus).